A 247-amino-acid polypeptide reads, in one-letter code: UDP-2,3-diacylglucosamine hydrolase (247 aa).

5 residues coordinate Mn(2+): aspartate 8, histidine 10, aspartate 41, asparagine 79, and histidine 114. Position 79–80 (79–80 (NR)) interacts with substrate. Substrate contacts are provided by aspartate 122, serine 160, aspartate 171, glutamine 174, and histidine 202. Positions 202 and 204 each coordinate Mn(2+).

It belongs to the LpxH family. Mn(2+) serves as cofactor.

Its subcellular location is the cell inner membrane. The enzyme catalyses UDP-2-N,3-O-bis[(3R)-3-hydroxytetradecanoyl]-alpha-D-glucosamine + H2O = 2-N,3-O-bis[(3R)-3-hydroxytetradecanoyl]-alpha-D-glucosaminyl 1-phosphate + UMP + 2 H(+). The protein operates within glycolipid biosynthesis; lipid IV(A) biosynthesis; lipid IV(A) from (3R)-3-hydroxytetradecanoyl-[acyl-carrier-protein] and UDP-N-acetyl-alpha-D-glucosamine: step 4/6. Hydrolyzes the pyrophosphate bond of UDP-2,3-diacylglucosamine to yield 2,3-diacylglucosamine 1-phosphate (lipid X) and UMP by catalyzing the attack of water at the alpha-P atom. Involved in the biosynthesis of lipid A, a phosphorylated glycolipid that anchors the lipopolysaccharide to the outer membrane of the cell. This Xanthomonas campestris pv. campestris (strain B100) protein is UDP-2,3-diacylglucosamine hydrolase.